A 512-amino-acid chain; its full sequence is Podocan-like protein 1 (512 aa).

Positions 1 to 26 (MAESGLAMWPSLLLLLLLPGPPPVAG) are cleaved as a signal peptide. Residues 37–74 (ESLQPLPRACPLRCSCPRVDTVDCDGLDLRVFPDNITR) enclose the LRRNT domain. Residue N71 is glycosylated (N-linked (GlcNAc...) asparagine). 17 LRR repeats span residues 75–96 (AAQH…ELSR), 99–119 (GLRT…PDEA), 125–146 (QLQH…LPRS), 147–167 (LRVA…TFGE), 170–193 (ALRS…AFRG), 196–216 (AIAT…SLPP), 217–238 (SLER…ALSR), 241–261 (QLRE…DATT), 267–288 (SLEY…LPRT), 289–309 (LAIL…RLHG), 312–332 (GLRY…PAGA), 338–359 (GLHT…LPRR), 360–380 (LRAL…DLVA), 383–396 (GLTE…RLAS), 409–430 (ALRS…LPTG), 431–451 (LRTL…PLAG), and 454–474 (QLRE…GPGT).

The protein belongs to the small leucine-rich proteoglycan (SLRP) family. SLRP class V subfamily. Post-translationally, N-glycosylated.

It is found in the secreted. It localises to the extracellular space. Its subcellular location is the extracellular matrix. In Homo sapiens (Human), this protein is Podocan-like protein 1 (PODNL1).